The following is a 127-amino-acid chain: Small ribosomal subunit protein uS13 (127 aa).

Residues 90–127 (RRHRQGLPVRGQRTRTNARTRRGRRLTVAGKKKTPAKK) are disordered. Positions 101–127 (QRTRTNARTRRGRRLTVAGKKKTPAKK) are enriched in basic residues.

It belongs to the universal ribosomal protein uS13 family. In terms of assembly, part of the 30S ribosomal subunit. Forms a loose heterodimer with protein S19. Forms two bridges to the 50S subunit in the 70S ribosome.

Located at the top of the head of the 30S subunit, it contacts several helices of the 16S rRNA. In the 70S ribosome it contacts the 23S rRNA (bridge B1a) and protein L5 of the 50S subunit (bridge B1b), connecting the 2 subunits; these bridges are implicated in subunit movement. Contacts the tRNAs in the A and P-sites. The protein is Small ribosomal subunit protein uS13 of Synechocystis sp. (strain ATCC 27184 / PCC 6803 / Kazusa).